The primary structure comprises 250 residues: MVTAVSPENLKEWHTPSTRPDVIHELIHGVDRYNPSNLPFMEDYLATELKEGQYDLFGNLAILKLYQFNPQHSNPDVIINILIKALAATVSGPDFNLCLEMLREPSAILHDIESADEALVIVMPYLQRLHELSRTCQFTKFWQEINSDSEAAKILRTRYLPQHASPLDDFRFIFSASIASCFRRISLSQLSRWLDIPSDKVGEWCSKVEWTVEGQDAVIPNNGQNDVKAGVVKENVQLGQLTKLVAAAGY.

The region spanning 54–235 (YDLFGNLAIL…DVKAGVVKEN (182 aa)) is the PCI domain.

The protein belongs to the eIF-3 subunit K family. As to quaternary structure, component of the eukaryotic translation initiation factor 3 (eIF-3) complex.

Its subcellular location is the cytoplasm. Functionally, component of the eukaryotic translation initiation factor 3 (eIF-3) complex, which is involved in protein synthesis of a specialized repertoire of mRNAs and, together with other initiation factors, stimulates binding of mRNA and methionyl-tRNAi to the 40S ribosome. The eIF-3 complex specifically targets and initiates translation of a subset of mRNAs involved in cell proliferation. In Cryptococcus neoformans var. neoformans serotype D (strain B-3501A) (Filobasidiella neoformans), this protein is Eukaryotic translation initiation factor 3 subunit K.